The sequence spans 299 residues: CRISPR-associated endonuclease Cas1 3 (299 aa).

Residues E143, H210, and D223 each coordinate Mn(2+).

Belongs to the CRISPR-associated endonuclease Cas1 family. In terms of assembly, homodimer, forms a heterotetramer with a Cas2 homodimer. Mg(2+) serves as cofactor. It depends on Mn(2+) as a cofactor.

In terms of biological role, CRISPR (clustered regularly interspaced short palindromic repeat), is an adaptive immune system that provides protection against mobile genetic elements (viruses, transposable elements and conjugative plasmids). CRISPR clusters contain spacers, sequences complementary to antecedent mobile elements, and target invading nucleic acids. CRISPR clusters are transcribed and processed into CRISPR RNA (crRNA). Acts as a dsDNA endonuclease. Involved in the integration of spacer DNA into the CRISPR cassette. This chain is CRISPR-associated endonuclease Cas1 3, found in Methanospirillum hungatei JF-1 (strain ATCC 27890 / DSM 864 / NBRC 100397 / JF-1).